Reading from the N-terminus, the 224-residue chain is Peroxiredoxin-6 (224 aa).

The 165-residue stretch at 5 to 169 (LLLGDVAPNF…ILRVVISLQL (165 aa)) folds into the Thioredoxin domain. The required and sufficient for targeting to lysosomes and lamellar bodies stretch occupies residues 31 to 40 (DSWGILFSHP). Thr-44 carries the post-translational modification Phosphothreonine. Cys-47 functions as the Cysteine sulfenic acid (-SOH) intermediate; for peroxidase activity in the catalytic mechanism. Lys-63 is modified (N6-acetyllysine). Tyr-89 carries the post-translational modification Phosphotyrosine. Catalysis depends on Asp-140, which acts as the For phospholipase activity. Residue Thr-177 is modified to Phosphothreonine; by MAPK. The residue at position 209 (Lys-209) is an N6-acetyllysine; alternate. The residue at position 209 (Lys-209) is an N6-succinyllysine; alternate.

Belongs to the peroxiredoxin family. Prx6 subfamily. As to quaternary structure, homodimer. Interacts with GSTP1; mediates PRDX6 glutathionylation and regeneration. Interacts with APEX1. Interacts with STH. May interact with FAM168B. May interact with HTR2A. Post-translationally, irreversibly inactivated by overoxidation of Cys-47 to sulfinic acid (Cys-SO(2)H) and sulfonic acid (Cys-SO(3)H) forms upon oxidative stress. In terms of processing, phosphorylation at Thr-177 by MAP kinases increases the phospholipase activity of the enzyme. The phosphorylated form exhibits a greater lysophosphatidylcholine acyltransferase activity compared to the non-phosphorylated form.

The protein resides in the cytoplasm. The protein localises to the lysosome. The enzyme catalyses a hydroperoxide + 2 glutathione = an alcohol + glutathione disulfide + H2O. The catalysed reaction is a 1,2-diacyl-sn-glycero-3-phosphocholine + H2O = a 1-acyl-sn-glycero-3-phosphocholine + a fatty acid + H(+). It carries out the reaction a 1-acyl-sn-glycero-3-phosphocholine + an acyl-CoA = a 1,2-diacyl-sn-glycero-3-phosphocholine + CoA. It catalyses the reaction 1-hexadecanoyl-sn-glycero-3-phosphocholine + hexadecanoyl-CoA = 1,2-dihexadecanoyl-sn-glycero-3-phosphocholine + CoA. The enzyme catalyses 1,2-dihexadecanoyl-sn-glycero-3-phosphocholine + H2O = 1-hexadecanoyl-sn-glycero-3-phosphocholine + hexadecanoate + H(+). MJ33 or lithium;[(2R)-1-hexadecoxy-3-(2,2,2-trifluoroethoxy)propan-2-yl] methyl phosphate inhibits its phospholipase A2 activity. CI-976 or 2,2-Dimethyl-N-(2,4,6-trimethoxyphenyl)dodecanamide inhibits its lysophosphatidylcholine acyltransferase activity. Its function is as follows. Thiol-specific peroxidase that catalyzes the reduction of hydrogen peroxide and organic hydroperoxides to water and alcohols, respectively. Can reduce H(2)O(2) and short chain organic, fatty acid, and phospholipid hydroperoxides. Also has phospholipase activity, can therefore either reduce the oxidized sn-2 fatty acyl group of phospholipids (peroxidase activity) or hydrolyze the sn-2 ester bond of phospholipids (phospholipase activity). These activities are dependent on binding to phospholipids at acidic pH and to oxidized phospholipds at cytosolic pH. Plays a role in cell protection against oxidative stress by detoxifying peroxides and in phospholipid homeostasis. Exhibits acyl-CoA-dependent lysophospholipid acyltransferase which mediates the conversion of lysophosphatidylcholine (1-acyl-sn-glycero-3-phosphocholine or LPC) into phosphatidylcholine (1,2-diacyl-sn-glycero-3-phosphocholine or PC). Shows a clear preference for LPC as the lysophospholipid and for palmitoyl CoA as the fatty acyl substrate. This is Peroxiredoxin-6 (PRDX6) from Homo sapiens (Human).